The chain runs to 127 residues: Small ribosomal subunit protein bS6 (127 aa).

The protein belongs to the bacterial ribosomal protein bS6 family.

In terms of biological role, binds together with bS18 to 16S ribosomal RNA. This chain is Small ribosomal subunit protein bS6, found in Buchnera aphidicola subsp. Cinara cedri (strain Cc).